A 1222-amino-acid chain; its full sequence is MEADWDEVSQVAVPPPGPHLLPTVASTVAFDDSQELLWVGNEFGRVSSFYGPELQRYTSVKAHASSEGQVRQFLFHDKGVISLSANSVHLASRCGLTQWHISHPEMTELRCMSFTAQPHKIIVAGLQSAMFIIDVEKGAIVDQLSTEYRYTIMKRSRYLCAATDTGSVNVLSLTDFSVVKSWKAHGAVINDMDARNDFLVTCGFSVRHAGSPIVDPLANVYDLKSLIPLPPIPFHAGAAFVRMHPRLQTTSFIASQTGQLQVVDLMNPNTINLRQANVAFMLGLEVSPSGEALAINDAECSIHLWGSPSKIHFNEIGKETEFSDIPTRPSMLDWSNDTPLNVIGMPYYHERLLSAWPSHLIFEIGNAPVPMDPAILPYLRPSEIGQYAQNPRKKRRYQVENTRLQSSTEVALAAPKFLSEKARELPNSKPEGAQEAVGALQGLKINGETKEDPLLKYSNVEIKYSKFGVDDFDFRYYNKTEFSGLETHIANSFTNSLLQLLKFIPLVRNLALHHVSTNCLCESCLLCEMGFLFDMLDKANGQNCQATNLLKTFSGFREAANLGLLEESLSNKSLSSAIQSVHRFFLNQIAHDYRTVYPNSDSLDNTLSTAAVESICCMFCRNEIVRPGNAFVTELIYPAADPKQAHRNQACRFSNILRSSIERETQNRGWCSTCRRYQQVSIRKTVQRMPLVLMLNAAINNSAHRRFWSIPGWLPEKIGVMIEDNQIQCYEGEQLRIRQQNNFEGLVVYELVGIVAEIDIVEQKKPHLVSFVDVSISAREPTKKSNWHLFNDFLVTGVSKEEVFSFNQGWKSPCTLAYQISTGRHGLDDSWKNELDTTLLFYEWSMNNRPPTDKCHILKSEEKPIAGTPIALDTEFVDLEKAEIEVKADGTQEMIRPSKSGLARVSVIRGSGNDEGVPFIDDYITIKDPIVDYVTQYSGIKPGDLDPRTSRHNLVALKVAYKKLWLLLNLGCVFVGHGLASDFRKINIQVPKAQTIDTQYLFFHPGKNRRLSLRYLAWAVFKEYIQEETTTTTSTSITTTTNPNIHDANTSTTTTTAITTTPPEGHDSIEDARMALRLWKKFKEYEDAGIVNQILEEIFREGVKVGFRPPARYPSQATPNPNNNNINNGVNPNGLSTPGSTNPISRLPLSGRNTPDFILPASASAAASVTGGPAGGGSSNGSMSGSTPSTPRQAFRRSTALTPSNGSFGGAKGLTFGGSPMR.

WD repeat units lie at residues 104 to 143 (PEMT…IVDQ) and 276 to 315 (ANVA…HFNE). Residues 316 to 451 (IGKETEFSDI…GLKINGETKE (136 aa)) are linker. The USP domain maps to 452 to 821 (DPLLKYSNVE…SPCTLAYQIS (370 aa)). The Exonuclease domain occupies 871 to 1027 (ALDTEFVDLE…WAVFKEYIQE (157 aa)). A divalent metal cation contacts are provided by D873, E875, and D982. The disordered stretch occupies residues 1035 to 1067 (TSITTTTNPNIHDANTSTTTTTAITTTPPEGHD). Residues 1050–1061 (TSTTTTTAITTT) show a composition bias toward low complexity. Residue D1071 participates in a divalent metal cation binding. Disordered regions lie at residues 1110–1152 (PARY…LSGR) and 1167–1222 (ASVT…SPMR). Residues 1119 to 1133 (PNPNNNNINNGVNPN) are compositionally biased toward low complexity. Residues 1134–1144 (GLSTPGSTNPI) are compositionally biased toward polar residues. Over residues 1180–1191 (NGSMSGSTPSTP) the composition is skewed to low complexity. A compositionally biased stretch (gly residues) spans 1207 to 1216 (SFGGAKGLTF).

This sequence belongs to the peptidase C19 family. PAN2 subfamily. In terms of assembly, forms a heterotrimer with an asymmetric homodimer of the regulatory subunit PAN3 to form the poly(A)-nuclease (PAN) deadenylation complex. Requires a divalent metal cation as cofactor.

It localises to the cytoplasm. It catalyses the reaction Exonucleolytic cleavage of poly(A) to 5'-AMP.. Its activity is regulated as follows. Positively regulated by the regulatory subunit PAN3. Functionally, catalytic subunit of the poly(A)-nuclease (PAN) deadenylation complex, one of two cytoplasmic mRNA deadenylases involved in mRNA turnover. PAN specifically shortens poly(A) tails of RNA and the activity is stimulated by poly(A)-binding protein PAB1. PAN deadenylation is followed by rapid degradation of the shortened mRNA tails by the CCR4-NOT complex. Deadenylated mRNAs are then degraded by two alternative mechanisms, namely exosome-mediated 3'-5' exonucleolytic degradation, or deadenylation-dependent mRNA decaping and subsequent 5'-3' exonucleolytic degradation by XRN1. May also be involved in post-transcriptional maturation of mRNA poly(A) tails. The sequence is that of PAN2-PAN3 deadenylation complex catalytic subunit PAN2 from Coccidioides immitis (strain RS) (Valley fever fungus).